We begin with the raw amino-acid sequence, 879 residues long: Phosphoinositide 3-kinase regulatory subunit 5 (879 aa).

Residues 23–100 are heterodimerization; it reads SGSTDISSNW…APYIPETSDL (78 aa). 2 disordered regions span residues 314–345 and 570–590; these read SLED…PKQD and SSST…PSPS. Over residues 315-336 the composition is skewed to acidic residues; it reads LEDDVTEEDEEVDFEEVDDKDE. Residues 570–589 show a composition bias toward polar residues; the sequence is SSSTNAPMTNAESPLKSPSP. Residues 651-751 are interaction with beta-gamma G protein dimers; that stretch reads PILADMVLYY…WSNGEKVCTS (101 aa).

Heterodimer. Interacts with a catalytic subunit and with beta-gamma G protein dimers.

It localises to the nucleus. The protein localises to the cytoplasm. It is found in the cell membrane. With respect to regulation, greatly activated by G gamma proteins. Its function is as follows. Regulatory subunit of the PI3K gamma complex. Required for recruitment of the catalytic subunit to the plasma membrane via interaction with beta-gamma G protein dimers. Required for G protein-mediated activation of PIK3CG. This Xenopus laevis (African clawed frog) protein is Phosphoinositide 3-kinase regulatory subunit 5 (pik3r5).